A 156-amino-acid polypeptide reads, in one-letter code: ATP synthase subunit b (156 aa).

A helical membrane pass occupies residues 7–29 (LFAQMVVFLVLAWFTMKFVWPPL).

It belongs to the ATPase B chain family. F-type ATPases have 2 components, F(1) - the catalytic core - and F(0) - the membrane proton channel. F(1) has five subunits: alpha(3), beta(3), gamma(1), delta(1), epsilon(1). F(0) has three main subunits: a(1), b(2) and c(10-14). The alpha and beta chains form an alternating ring which encloses part of the gamma chain. F(1) is attached to F(0) by a central stalk formed by the gamma and epsilon chains, while a peripheral stalk is formed by the delta and b chains.

Its subcellular location is the cell inner membrane. F(1)F(0) ATP synthase produces ATP from ADP in the presence of a proton or sodium gradient. F-type ATPases consist of two structural domains, F(1) containing the extramembraneous catalytic core and F(0) containing the membrane proton channel, linked together by a central stalk and a peripheral stalk. During catalysis, ATP synthesis in the catalytic domain of F(1) is coupled via a rotary mechanism of the central stalk subunits to proton translocation. Its function is as follows. Component of the F(0) channel, it forms part of the peripheral stalk, linking F(1) to F(0). This chain is ATP synthase subunit b, found in Burkholderia pseudomallei (strain 668).